Consider the following 174-residue polypeptide: Peptide deformylase (174 aa).

Cysteine 96 and histidine 138 together coordinate Fe cation. Glutamate 139 is an active-site residue. Fe cation is bound at residue histidine 142.

It belongs to the polypeptide deformylase family. It depends on Fe(2+) as a cofactor.

The enzyme catalyses N-terminal N-formyl-L-methionyl-[peptide] + H2O = N-terminal L-methionyl-[peptide] + formate. Its function is as follows. Removes the formyl group from the N-terminal Met of newly synthesized proteins. Requires at least a dipeptide for an efficient rate of reaction. N-terminal L-methionine is a prerequisite for activity but the enzyme has broad specificity at other positions. The sequence is that of Peptide deformylase from Helicobacter pylori (strain P12).